A 343-amino-acid chain; its full sequence is NAD-dependent deacetylase sir2E (343 aa).

One can recognise a Deacetylase sirtuin-type domain in the interval 27-300; the sequence is YLKNKKEFEF…PLLERQLLYE (274 aa). Histidine 152 (proton acceptor) is an active-site residue. Zn(2+) contacts are provided by cysteine 160, cysteine 165, cysteine 200, and cysteine 203.

The protein belongs to the sirtuin family.

The protein localises to the nucleus. The enzyme catalyses N(6)-acetyl-L-lysyl-[protein] + NAD(+) + H2O = 2''-O-acetyl-ADP-D-ribose + nicotinamide + L-lysyl-[protein]. In terms of biological role, NAD-dependent deacetylase, which plays an important role in the regulation of transcriptional repression. May play a role in cell cycle. When overexpressed, the cell cycle is accelerated. This is NAD-dependent deacetylase sir2E (sir2E) from Dictyostelium discoideum (Social amoeba).